Consider the following 268-residue polypeptide: tRNA pseudouridine synthase A (268 aa).

Asp52 serves as the catalytic Nucleophile. Residue Tyr110 coordinates substrate.

It belongs to the tRNA pseudouridine synthase TruA family. Homodimer.

The catalysed reaction is uridine(38/39/40) in tRNA = pseudouridine(38/39/40) in tRNA. In terms of biological role, formation of pseudouridine at positions 38, 39 and 40 in the anticodon stem and loop of transfer RNAs. This chain is tRNA pseudouridine synthase A, found in Prochlorococcus marinus (strain AS9601).